The following is a 137-amino-acid chain: NADH-quinone oxidoreductase subunit A (137 aa).

The next 3 helical transmembrane spans lie at 12 to 32 (WGFAIFLLGVVGLCAFMLGLS), 66 to 86 (FYLVAMLFVIFDIEALFLFAW), and 95 to 115 (WTGFVEALVFIAILLAGLVYL).

The protein belongs to the complex I subunit 3 family. NDH-1 is composed of 13 different subunits. Subunits NuoA, H, J, K, L, M, N constitute the membrane sector of the complex.

The protein resides in the cell inner membrane. The catalysed reaction is a quinone + NADH + 5 H(+)(in) = a quinol + NAD(+) + 4 H(+)(out). Functionally, NDH-1 shuttles electrons from NADH, via FMN and iron-sulfur (Fe-S) centers, to quinones in the respiratory chain. The immediate electron acceptor for the enzyme in this species is believed to be ubiquinone. Couples the redox reaction to proton translocation (for every two electrons transferred, four hydrogen ions are translocated across the cytoplasmic membrane), and thus conserves the redox energy in a proton gradient. The polypeptide is NADH-quinone oxidoreductase subunit A (Pseudomonas savastanoi pv. phaseolicola (strain 1448A / Race 6) (Pseudomonas syringae pv. phaseolicola (strain 1448A / Race 6))).